We begin with the raw amino-acid sequence, 322 residues long: MAIKKRNKIRLPSGSPEEVGIDGSAHKPMQQIKPLVSNDSEDDDNDICVLQPIKFKKVPKRDITFDGEQAIKEDNSHYEDLYHSKKNTNASTRNKDDLLILNMEDLMEGNHHLLSDSSEAGSSSEGEHISSIPTRGEIAKLKAQKSLSRRKISESDVTTERDYVKLLDSEDKREIMETIRLNGGLKRNNEKEITNFSDDEMQGFQDEMLALTDNQIAIQKDSKRKIIEKAINEVPYRTNEEWETQLLSKGNINKSNEKIITPLPVLFPDDDESGNSIERINEMVSKICLQRKKVEMRLQALEKTKIDLEKSKASLINKLIGN.

The tract at residues methionine 1–glutamine 30 is disordered. Position 40 is a phosphoserine (serine 40). Positions leucine 113 to glutamate 137 are disordered. Positions serine 115 to isoleucine 132 are enriched in low complexity. A phosphoserine mark is found at serine 153 and serine 197.

Component of the NTR complex (NTC-related complex), composed of NTR1, NTR2 and PRP43. Interacts with CLF1, NTR1 and PRP43.

Its subcellular location is the cytoplasm. The protein resides in the nucleus. Functionally, involved in pre-mRNA splicing and spliceosome disassembly. Promotes release of excised lariat intron from the spliceosome by acting as a receptor for PRP43. This targeting of PRP43 leads to disassembly of the spliceosome with the separation of the U2, U5, U6 snRNPs and the NTC complex. The polypeptide is Pre-mRNA-splicing factor NTR2 (NTR2) (Saccharomyces cerevisiae (strain ATCC 204508 / S288c) (Baker's yeast)).